The chain runs to 393 residues: S-adenosylmethionine synthase (393 aa).

Glu9 serves as a coordination point for Mg(2+). His15 lines the ATP pocket. Residue Glu43 participates in K(+) binding. L-methionine is bound by residues Glu56 and Gln99. Residues 167 to 169, 235 to 238, Asp246, 252 to 253, Ala269, Lys273, and Lys277 contribute to the ATP site; these read HGK, SGRF, and RK. An L-methionine-binding site is contributed by Asp246. Residue Lys277 coordinates L-methionine.

Belongs to the AdoMet synthase family. As to quaternary structure, homotetramer. Mn(2+) serves as cofactor. Requires Mg(2+) as cofactor. The cofactor is Co(2+). It depends on K(+) as a cofactor. In terms of tissue distribution, root.

The protein localises to the cytoplasm. The catalysed reaction is L-methionine + ATP + H2O = S-adenosyl-L-methionine + phosphate + diphosphate. The protein operates within amino-acid biosynthesis; S-adenosyl-L-methionine biosynthesis; S-adenosyl-L-methionine from L-methionine: step 1/1. Its function is as follows. Catalyzes the formation of S-adenosylmethionine from methionine and ATP. The reaction comprises two steps that are both catalyzed by the same enzyme: formation of S-adenosylmethionine (AdoMet) and triphosphate, and subsequent hydrolysis of the triphosphate. The sequence is that of S-adenosylmethionine synthase (METK) from Pinus banksiana (Jack pine).